Here is a 317-residue protein sequence, read N- to C-terminus: Lactamase-like protein adaB (317 aa).

Residues His-97, His-99, Asp-101, and His-102 each contribute to the Zn(2+) site. Catalysis depends on Asp-101, which acts as the Proton donor/acceptor.

Belongs to the metallo-beta-lactamase superfamily. Zn(2+) is required as a cofactor.

The catalysed reaction is 3-(2,4-dioxopentyl)-2,3,6,8,9-pentahydroxy-1-oxo-1,2,3,4-tetrahydroanthracene-2-carboxyl-[ACP] = 2-acetyl-3,4a,8,10,11,12a-hexahydroxy-1,4,4a,5,12,12a-hexahydrotetracene-1,12-dione + holo-[ACP] + H(+). The protein operates within secondary metabolite biosynthesis. Functionally, lactamase-like protein; part of the gene cluster that mediates the biosynthesis of the linear tetracyclic TAN-1612 neuropeptide Y receptor antagonist. The decaketide backbone of TAN-1612 is synthesized by the non-reducing polyketide synthase adaA via condensation of one acetyl-CoA starter unit with 9 malonyl-CoA units. The FAD-dependent monooxygenase adaC then performs hydroxylation at C2 while the polaketide chain is still attached to the NRPKS adaA. The alpha-hydroxylation step at C2 appears to be crucial for the following C18-C1 Claisen cyclization and release of the C9-hydroxyl version of TAN-1612 from the NRPKS adaA, two steps performed by the lactamase-like protein adaB. Finally, the O-methyltransferase adaD performs the C9 O-methylation to complete the biosynthesis of TAN-1612. This chain is Lactamase-like protein adaB, found in Aspergillus niger (strain ATCC MYA-4892 / CBS 513.88 / FGSC A1513).